A 27-amino-acid polypeptide reads, in one-letter code: Urumin (27 aa).

As to expression, expressed by the skin glands.

The protein resides in the secreted. In terms of biological role, amphibian peptide that shows viricidal activity against human H1N1 influenza A virus. It specifically targets the conserved stalk region of H1 hemagglutinin, and acts by actively destroying influenza virions. It shows a reduced activity on human H3N2 influenza A virus and no activity against other viruses (HIV, SIV, HSV-II, hepatitis C, Ebola, Zika, and Dengue viruses). In vivo, the peptide also protects mice infected with mouse-adapted influenza virus from lethal influenza infection. The peptide synthesized in D-amino acids is inactive. The polypeptide is Urumin (Hydrophylax bahuvistara (Wide-spread fungoid frog)).